Here is a 610-residue protein sequence, read N- to C-terminus: Protein Spindly-B (610 aa).

Residues 1 to 392 (MEESETVLKL…IDKVKDELSL (392 aa)) adopt a coiled-coil conformation. Residues 474–610 (TEAHGVSDAT…KPATAQCPQQ (137 aa)) are disordered. 2 stretches are compositionally biased toward basic and acidic residues: residues 493-511 (SDDK…KDQD) and 535-548 (RIME…DLNK). Positions 549-561 (RNPNNCTITSIHP) are enriched in polar residues. Residues 570–583 (SELKKVDEEQEKRK) are compositionally biased toward basic and acidic residues.

It belongs to the Spindly family.

The protein resides in the chromosome. It localises to the centromere. It is found in the kinetochore. Required for the localization of dynein and dynactin to the mitotic kintochore. Dynein is believed to control the initial lateral interaction between the kinetochore and spindle microtubules and to facilitate the subsequent formation of end-on kinetochore-microtubule attachments mediated by the NDC80 complex. This chain is Protein Spindly-B (spdl1-b), found in Xenopus laevis (African clawed frog).